The primary structure comprises 323 residues: tRNA(Ile)-lysidine synthase (323 aa).

33–38 (SGGSDS) contacts ATP.

The protein belongs to the tRNA(Ile)-lysidine synthase family.

The protein resides in the cytoplasm. The enzyme catalyses cytidine(34) in tRNA(Ile2) + L-lysine + ATP = lysidine(34) in tRNA(Ile2) + AMP + diphosphate + H(+). In terms of biological role, ligates lysine onto the cytidine present at position 34 of the AUA codon-specific tRNA(Ile) that contains the anticodon CAU, in an ATP-dependent manner. Cytidine is converted to lysidine, thus changing the amino acid specificity of the tRNA from methionine to isoleucine. This chain is tRNA(Ile)-lysidine synthase, found in Mycobacterium leprae (strain TN).